The following is a 396-amino-acid chain: 8-amino-7-oxononanoate synthase (396 aa).

Residue Arg19 participates in substrate binding. Residue 106 to 107 participates in pyridoxal 5'-phosphate binding; that stretch reads GY. His131 contributes to the substrate binding site. Ser176, His204, and Thr233 together coordinate pyridoxal 5'-phosphate. Lys236 bears the N6-(pyridoxal phosphate)lysine mark. Thr350 is a binding site for substrate.

This sequence belongs to the class-II pyridoxal-phosphate-dependent aminotransferase family. BioF subfamily. Homodimer. Pyridoxal 5'-phosphate serves as cofactor.

It carries out the reaction 6-carboxyhexanoyl-[ACP] + L-alanine + H(+) = (8S)-8-amino-7-oxononanoate + holo-[ACP] + CO2. Its pathway is cofactor biosynthesis; biotin biosynthesis. Its function is as follows. Catalyzes the decarboxylative condensation of pimeloyl-[acyl-carrier protein] and L-alanine to produce 8-amino-7-oxononanoate (AON), [acyl-carrier protein], and carbon dioxide. The polypeptide is 8-amino-7-oxononanoate synthase (Pseudomonas savastanoi pv. phaseolicola (strain 1448A / Race 6) (Pseudomonas syringae pv. phaseolicola (strain 1448A / Race 6))).